A 134-amino-acid polypeptide reads, in one-letter code: Phosphoribosyl-AMP cyclohydrolase (134 aa).

Asp-90 contributes to the Mg(2+) binding site. Cys-91 provides a ligand contact to Zn(2+). Mg(2+) contacts are provided by Asp-92 and Asp-94. Positions 107 and 114 each coordinate Zn(2+).

This sequence belongs to the PRA-CH family. As to quaternary structure, homodimer. Requires Mg(2+) as cofactor. The cofactor is Zn(2+).

It is found in the cytoplasm. The catalysed reaction is 1-(5-phospho-beta-D-ribosyl)-5'-AMP + H2O = 1-(5-phospho-beta-D-ribosyl)-5-[(5-phospho-beta-D-ribosylamino)methylideneamino]imidazole-4-carboxamide. It participates in amino-acid biosynthesis; L-histidine biosynthesis; L-histidine from 5-phospho-alpha-D-ribose 1-diphosphate: step 3/9. In terms of biological role, catalyzes the hydrolysis of the adenine ring of phosphoribosyl-AMP. In Arthrobacter sp. (strain FB24), this protein is Phosphoribosyl-AMP cyclohydrolase.